We begin with the raw amino-acid sequence, 106 residues long: UPF0642 protein YBL028C (106 aa).

Over residues 1 to 12 the composition is skewed to polar residues; that stretch reads MAKSLRASSHLN. Disordered stretches follow at residues 1–21 and 52–106; these read MAKS…RRGV and KEEQ…FTRF. Residues 62-72 are compositionally biased toward basic and acidic residues; that stretch reads DEKKSNEEAPR. Residues 83 to 106 are compositionally biased toward basic residues; sequence GRHHTYKKAKLMKQSKKKTSFTRF.

Belongs to the UPF0642 family.

In Saccharomyces cerevisiae (strain ATCC 204508 / S288c) (Baker's yeast), this protein is UPF0642 protein YBL028C.